A 132-amino-acid polypeptide reads, in one-letter code: Agouti-signaling protein (132 aa).

Residues 1–22 (MDVTRLLLATLLVFLCFFTAYS) form the signal peptide. An N-linked (GlcNAc...) asparagine glycan is attached at Asn-39. A disordered region spans residues 61–87 (QISRKEAEKKRSSKKEASMKKVARPRT). The segment covering 63 to 79 (SRKEAEKKRSSKKEASM) has biased composition (basic and acidic residues). Cystine bridges form between Cys-93-Cys-108, Cys-100-Cys-114, Cys-107-Cys-125, Cys-111-Cys-132, and Cys-116-Cys-123. An Agouti domain is found at 93–132 (CVATRDSCKSPAPACCDPCASCQCRFFRSACSCRVLSLNC).

It localises to the secreted. Involved in the regulation of melanogenesis. The binding of ASP to MC1R precludes alpha-MSH initiated signaling and thus blocks production of cAMP, leading to a down-regulation of eumelanogenesis (brown/black pigment) and thus increasing synthesis of pheomelanin (yellow/red pigment). This is Agouti-signaling protein (ASIP) from Macaca nigra (Celebes black macaque).